The primary structure comprises 378 residues: Spermidine/putrescine import ATP-binding protein PotA (378 aa).

The region spanning 18-248 (VQLAGIRKCF…PKNLFVAGFI (231 aa)) is the ABC transporter domain. 50-57 (GPSGCGKT) provides a ligand contact to ATP.

The protein belongs to the ABC transporter superfamily. Spermidine/putrescine importer (TC 3.A.1.11.1) family. As to quaternary structure, the complex is composed of two ATP-binding proteins (PotA), two transmembrane proteins (PotB and PotC) and a solute-binding protein (PotD).

It is found in the cell inner membrane. It carries out the reaction ATP + H2O + polyamine-[polyamine-binding protein]Side 1 = ADP + phosphate + polyamineSide 2 + [polyamine-binding protein]Side 1.. Part of the ABC transporter complex PotABCD involved in spermidine/putrescine import. Responsible for energy coupling to the transport system. This Shigella dysenteriae serotype 1 (strain Sd197) protein is Spermidine/putrescine import ATP-binding protein PotA.